A 43-amino-acid polypeptide reads, in one-letter code: Large ribosomal subunit protein uL11 (43 aa).

It belongs to the universal ribosomal protein uL11 family. Part of the ribosomal stalk of the 50S ribosomal subunit. Interacts with L10 and the large rRNA to form the base of the stalk. L10 forms an elongated spine to which L12 dimers bind in a sequential fashion forming a multimeric L10(L12)X complex. In terms of processing, one or more lysine residues are methylated.

In terms of biological role, forms part of the ribosomal stalk which helps the ribosome interact with GTP-bound translation factors. This Streptomyces galbus protein is Large ribosomal subunit protein uL11 (rplK).